Here is a 430-residue protein sequence, read N- to C-terminus: MSSVVVVGTQWGDEGKGKITDFLSENAEAIARYQGGNNAGHTIKFDGVTYKLHLIPSGIFYKEKISVIGNGMVVDPKALVEELKYLHDKGVDTSNLRISNRAHIILPYHIRIDEADEERKGANKIGTTKKGIGPAYMDKAARVGIRIIDLLDKETFKEKLEHNLGEKNRLLERFYELEGFKLEDILEEYYDYGQQFKEYVCDTSVVLNDALDDGKRVLFEGAQGVMLDIDQGTYPFVTSSNPIAGGVTIGSGVGPSKINHVVGVAKAYTTRVGDGPFPTELFDTIGDTIREVGHEYGTTTGRPRRVGWFDSVVVRHARRVSGLTDLSLTLLDVLTGIETLKICVAYKLDGKTITEFPASLKDLARCEPVYEELPGWTEDITGVTSLDDLPVNCRHYMERIAQLTGVQVSMFSVGPDRAQTHVIKSVWRLA.

GTP-binding positions include 12–18 (GDEGKGK) and 40–42 (GHT). The Proton acceptor role is filled by D13. 2 residues coordinate Mg(2+): D13 and G40. Residues 13-16 (DEGK), 38-41 (NAGH), T128, R142, Q223, T238, and R302 each bind IMP. Catalysis depends on H41, which acts as the Proton donor. 298–304 (TTTGRPR) contacts substrate. GTP is bound by residues R304, 330–332 (LLD), and 412–414 (SVG).

The protein belongs to the adenylosuccinate synthetase family. As to quaternary structure, homodimer. Mg(2+) serves as cofactor.

The protein resides in the cytoplasm. It catalyses the reaction IMP + L-aspartate + GTP = N(6)-(1,2-dicarboxyethyl)-AMP + GDP + phosphate + 2 H(+). The protein operates within purine metabolism; AMP biosynthesis via de novo pathway; AMP from IMP: step 1/2. In terms of biological role, plays an important role in the de novo pathway of purine nucleotide biosynthesis. Catalyzes the first committed step in the biosynthesis of AMP from IMP. This chain is Adenylosuccinate synthetase, found in Listeria monocytogenes serotype 4b (strain CLIP80459).